Here is an 89-residue protein sequence, read N- to C-terminus: Small ribosomal subunit protein uS15 (89 aa).

Belongs to the universal ribosomal protein uS15 family. Part of the 30S ribosomal subunit. Forms a bridge to the 50S subunit in the 70S ribosome, contacting the 23S rRNA.

One of the primary rRNA binding proteins, it binds directly to 16S rRNA where it helps nucleate assembly of the platform of the 30S subunit by binding and bridging several RNA helices of the 16S rRNA. In terms of biological role, forms an intersubunit bridge (bridge B4) with the 23S rRNA of the 50S subunit in the ribosome. This is Small ribosomal subunit protein uS15 from Limosilactobacillus fermentum (strain NBRC 3956 / LMG 18251) (Lactobacillus fermentum).